Consider the following 156-residue polypeptide: Small ribosomal subunit protein uS7 (156 aa).

This sequence belongs to the universal ribosomal protein uS7 family. Part of the 30S ribosomal subunit. Contacts proteins S9 and S11.

Its function is as follows. One of the primary rRNA binding proteins, it binds directly to 16S rRNA where it nucleates assembly of the head domain of the 30S subunit. Is located at the subunit interface close to the decoding center, probably blocks exit of the E-site tRNA. The protein is Small ribosomal subunit protein uS7 of Leptothrix cholodnii (strain ATCC 51168 / LMG 8142 / SP-6) (Leptothrix discophora (strain SP-6)).